The following is a 504-amino-acid chain: Cytochrome P450 monooxygenase iccC (504 aa).

The chain crosses the membrane as a helical span at residues 7 to 26 (LPWILLYTGFLAIFLSRLFS). 4 N-linked (GlcNAc...) asparagine glycosylation sites follow: N134, N312, N365, and N374. Residue C452 participates in heme binding. Residue N494 is glycosylated (N-linked (GlcNAc...) asparagine).

This sequence belongs to the cytochrome P450 family. The cofactor is heme.

The protein localises to the membrane. The enzyme catalyses (3E,5S)-3-[(2E,4E,8S,10E,12Z)-1-hydroxy-4,8-dimethyltetradeca-2,4,10,12-tetraen-1-ylidene]-5-[(4-hydroxyphenyl)methyl]pyrrolidine-2,4-dione + reduced [NADPH--hemoprotein reductase] + O2 = 3-[(2E,4E,8S,10E,12Z)-4,8-dimethyltetradeca-2,4,10,12-tetraenoyl]-4-hydroxy-5-(4-hydroxyphenyl)-1,2-dihydropyridin-2-one + oxidized [NADPH--hemoprotein reductase] + 2 H2O. It functions in the pathway mycotoxin biosynthesis. Its function is as follows. Cytochrome P450 monooxygenase; part of the gene cluster that mediates the biosynthesis of ilicicolin H, a 4-hydroxy-2-pyridonealkaloid that has potent and broad antifungal activities by inhibiting the mitochondrial respiration chain. IccC catalyzes the ring expansion of the tetramate intermediate to the acyclic 2-pyridone intermediate that contains the trans bis-diene chain. The biosynthesis of ilicicolin H starts with formation of the tetramic acid by the hybrid PKS-NRPS synthetase iccA with the partnering trans-enoyl reductase iccB since iccA lacks a designated enoylreductase (ER) domain. The cytochrome P450 monooxygenase iccC then catalyzes the ring expansion of the tetramate to the acyclic 2-pyridone. The pericyclase iccD further converts the acyclic 2-pyridone into 8-epi-ilicicolin H. Finally, the epimerase iccE converts 8-epi-ilicicolin H into ilicicolin H via epimerization. IccA to iccE are sufficient for ilicicolin H biosynthesis and the roles of the remaining enzymes, iccF, iccG and iccH within the pathway have still to be determined. The chain is Cytochrome P450 monooxygenase iccC from Talaromyces variabilis (Penicillium variabile).